A 182-amino-acid chain; its full sequence is Large ribosomal subunit protein uL6 (182 aa).

Belongs to the universal ribosomal protein uL6 family. As to quaternary structure, part of the 50S ribosomal subunit.

Its function is as follows. This protein binds to the 23S rRNA, and is important in its secondary structure. It is located near the subunit interface in the base of the L7/L12 stalk, and near the tRNA binding site of the peptidyltransferase center. This is Large ribosomal subunit protein uL6 from Pelotomaculum thermopropionicum (strain DSM 13744 / JCM 10971 / SI).